Reading from the N-terminus, the 157-residue chain is UPF0756 membrane protein ABC2716 (157 aa).

4 consecutive transmembrane segments (helical) span residues 8–28 (FLLLLMAIALIAKNQSLIIAI), 54–74 (LGVTIITIAVLVPIATGDIGF), 84–104 (LYAWVALGSGIAVALVAASGI), and 117–137 (LVLGTIVAVSFLNGVAVGPLI).

Belongs to the UPF0756 family.

It is found in the cell membrane. This chain is UPF0756 membrane protein ABC2716, found in Shouchella clausii (strain KSM-K16) (Alkalihalobacillus clausii).